Reading from the N-terminus, the 80-residue chain is Putative membrane protein insertion efficiency factor (80 aa).

Positions 61-80 are disordered; that stretch reads KTGKDPIPDHFSLKRNQEGE. The segment covering 62–80 has biased composition (basic and acidic residues); the sequence is TGKDPIPDHFSLKRNQEGE.

This sequence belongs to the UPF0161 family.

It is found in the cell membrane. In terms of biological role, could be involved in insertion of integral membrane proteins into the membrane. In Streptococcus pneumoniae (strain CGSP14), this protein is Putative membrane protein insertion efficiency factor.